The chain runs to 173 residues: Fimbrial protein PrsE (173 aa).

A signal peptide spans Met1–Ala24.

Its subcellular location is the secreted. The protein localises to the fimbrium. In terms of biological role, fimbriae (also called pili), polar filaments radiating from the surface of the bacterium to a length of 0.5-1.5 micrometers and numbering 100-300 per cell, enable bacteria to colonize the epithelium of specific host organs. In Escherichia coli, this protein is Fimbrial protein PrsE (prsE).